The sequence spans 346 residues: Integrin beta-1-binding protein 2 (346 aa).

Zn(2+) is bound by residues C5, C10, C24, and H27. The CHORD 1 domain maps to 5-64 (CHNKGCGQHFDPQTNLPDSCCHHPGVPVFHDALKGWSCCRKRTVDFSEFLNIKGCTVGPH). The SH3-binding motif lies at 28–31 (PGVP). 4 residues coordinate Zn(2+): C42, C43, C59, and H64. The short motif at 70–78 (PEAPQPEGP) is the SH3-binding element. The interval 70 to 113 (PEAPQPEGPATSSSLLEQKPPNTIPKSAETLRRERPKSDLPPKL) is disordered. Residues 79 to 94 (ATSSSLLEQKPPNTIP) show a composition bias toward polar residues. Over residues 98–109 (ETLRRERPKSDL) the composition is skewed to basic and acidic residues. Residues C150 and C155 each coordinate Zn(2+). The CHORD 2 domain occupies 150-209 (CQNPGCDAVYQGSESDATPCTYHPGAPRFHEGMKSWSCCGIQTLDFGVFLAQPGCRVGRH). Residues 159–162 (YQGS) carry the SH2-binding motif. 2 residues coordinate Zn(2+): C169 and H172. Residues 173–176 (PGAP) carry the SH3-binding motif. The Zn(2+) site is built by C187, C188, C204, and H209. Positions 216-305 (LASCRHDWHQ…ADPGFWAQLE (90 aa)) constitute a CS domain. Residues 235–238 (YGQI) carry the SH2-binding motif. A disordered region spans residues 311–346 (AEKSKSGVGLEMDEEESEDSDDDLSWTEEEEEAMGE). Over residues 321–346 (EMDEEESEDSDDDLSWTEEEEEAMGE) the composition is skewed to acidic residues.

In terms of assembly, interacts with beta-1 integrin subunit. This interaction is regulated by divalent cations, and it occurs only in absence of calcium.

May play a role during maturation and/or organization of muscles cells. This Sus scrofa (Pig) protein is Integrin beta-1-binding protein 2 (ITGB1BP2).